A 351-amino-acid polypeptide reads, in one-letter code: DNA-directed RNA polymerase subunit alpha (351 aa).

Residues 1–236 (MSVNTKNWQE…DQLTLFVHFE (236 aa)) form an alpha N-terminal domain (alpha-NTD) region. The tract at residues 256–351 (DDANQLNRYL…AKKLEQELLG (96 aa)) is alpha C-terminal domain (alpha-CTD).

This sequence belongs to the RNA polymerase alpha chain family. Homodimer. The RNAP catalytic core consists of 2 alpha, 1 beta, 1 beta' and 1 omega subunit. When a sigma factor is associated with the core the holoenzyme is formed, which can initiate transcription.

It carries out the reaction RNA(n) + a ribonucleoside 5'-triphosphate = RNA(n+1) + diphosphate. Its function is as follows. DNA-dependent RNA polymerase catalyzes the transcription of DNA into RNA using the four ribonucleoside triphosphates as substrates. The chain is DNA-directed RNA polymerase subunit alpha from Erythrobacter litoralis (strain HTCC2594).